Here is a 301-residue protein sequence, read N- to C-terminus: Triplex capsid protein 2 (301 aa).

It belongs to the herpesviridae TRX2 protein family. In terms of assembly, interacts with TRX1 and major capisd protein/MCP.

It localises to the virion. It is found in the host nucleus. Its function is as follows. Structural component of the T=16 icosahedral capsid. The capsid is composed of pentamers and hexamers of major capsid protein/MCP, which are linked together by heterotrimers called triplexes. These triplexes are formed by a single molecule of triplex protein 1/TRX1 and two copies of triplex protein 2/TRX2. Additionally, TRX1 is required for efficient transport of TRX2 to the nucleus, which is the site of capsid assembly. In Homo sapiens (Human), this protein is Triplex capsid protein 2.